Here is a 470-residue protein sequence, read N- to C-terminus: UDP-glycosyltransferase 72D1 (470 aa).

UDP-alpha-D-glucose is bound by residues S276, 343–345 (APQ), 360–368 (HCGWSSALE), and 382–385 (YAEQ).

Belongs to the UDP-glycosyltransferase family.

The protein is UDP-glycosyltransferase 72D1 (UGT72D1) of Arabidopsis thaliana (Mouse-ear cress).